The chain runs to 430 residues: WD repeat-containing protein jip5 (430 aa).

WD repeat units lie at residues 9-48, 72-111, 117-158, 215-262, 272-318, and 323-360; these read PLSS…AAAE, RHKG…VTSK, TNTD…SFKS, DQEE…DQSE, AGGE…GVVE, and DDIE…EEEE. A compositionally biased stretch (acidic residues) spans 356–374; the sequence is EEEEEEEEEEQEDIEDNDD. The disordered stretch occupies residues 356–430; that stretch reads EEEEEEEEEE…NGILKFKGME (75 aa). Over residues 382-397 the composition is skewed to basic and acidic residues; that stretch reads HALERDSDDSDARADS. Residues 405 to 416 show a composition bias toward basic residues; that stretch reads RKKRKKKKKGKK.

It belongs to the WD repeat WDR55 family.

The protein resides in the nucleus. The protein localises to the nucleolus. This chain is WD repeat-containing protein jip5 (jip5), found in Botryotinia fuckeliana (strain B05.10) (Noble rot fungus).